The following is a 224-amino-acid chain: Oxalate oxidase GF-3.8 (224 aa).

The N-terminal stretch at Met-1–Ser-23 is a signal peptide. Cysteines 33 and 49 form a disulfide. Positions Ser-63–Glu-214 constitute a Cupin type-1 domain. N-linked (GlcNAc...) asparagine glycosylation is found at Asn-70 and Asn-75. Positions 111, 113, 118, and 160 each coordinate Mn(2+).

Belongs to the germin family. In terms of assembly, oligomer (believed to be a pentamer but probably hexamer).

It is found in the secreted. The protein resides in the extracellular space. Its subcellular location is the apoplast. The protein localises to the cytoplasm. It localises to the cell wall. It carries out the reaction oxalate + O2 + 2 H(+) = H2O2 + 2 CO2. Produces developmental and stress-related release of hydrogen peroxide in the apoplast. May play an important role in several aspects of plant growth and defense mechanisms. The polypeptide is Oxalate oxidase GF-3.8 (Triticum aestivum (Wheat)).